Here is a 63-residue protein sequence, read N- to C-terminus: Large ribosomal subunit protein bL28 (63 aa).

The protein belongs to the bacterial ribosomal protein bL28 family.

The polypeptide is Large ribosomal subunit protein bL28 (Clostridium perfringens (strain ATCC 13124 / DSM 756 / JCM 1290 / NCIMB 6125 / NCTC 8237 / Type A)).